Here is a 118-residue protein sequence, read N- to C-terminus: MKYVMLLLQVGVLYVFSLVGTWIQGVFHLSMPGSLIGMLMLFLLLSTRILPLKWFEEGAEKLLVFLPLFLIPSTTGLMEYESFLFSKGSIIFLLVVISTVVTLIVSGYISQLLVTSKK.

Helical transmembrane passes span 5-27, 31-50, 62-84, and 88-110; these read MLLL…QGVF, MPGS…TRIL, LLVF…ESFL, and GSII…GYIS.

Belongs to the CidA/LrgA family. CidA subfamily.

It is found in the cell membrane. Increases the activity of extracellular murein hydrolases possibly by mediating their export via hole formation. Inhibited by the antiholin-like proteins LrgAB. In an unstressed cell, the LrgAB products probably inhibit the function of the CidA protein. When a cell is stressed by the addition of antibiotics or by other factors in the environment, CidA possibly oligomerizes within the bacterial cell membrane, creating lesions that disrupt the proton motive force, which in turn results in loss of cell viability. These lesions are also hypothesized to regulate the subsequent cell lysis by either allowing the murein hydrolases access to the cell wall substrate and/or regulating their activity by a possible change in the cell wall pH that results from loss of membrane potential. The sequence is that of Holin-like protein CidA 2 (cidA2) from Bacillus anthracis.